The following is a 729-amino-acid chain: Replication restart protein PriA (729 aa).

The 168-residue stretch at 209–376 (QTALGRFRSF…QSGAYRLLQL (168 aa)) folds into the Helicase ATP-binding domain. 222–229 (GITGSGKT) contacts ATP. The DEAH box signature appears at 319-322 (DEEH). 8 residues coordinate Zn(2+): Cys-436, Cys-439, Cys-445, Cys-448, Cys-463, Cys-466, Cys-476, and Cys-479. The 153-residue stretch at 471–623 (PIPFKCPDCG…YAVFAENELN (153 aa)) folds into the Helicase C-terminal domain.

Belongs to the helicase family. PriA subfamily. In terms of assembly, interacts with PriB with high affinity in the absence of DNA. Component of the replication restart primosome. Zn(2+) serves as cofactor.

The enzyme catalyses Couples ATP hydrolysis with the unwinding of duplex DNA by translocating in the 3'-5' direction.. It carries out the reaction ATP + H2O = ADP + phosphate + H(+). Its activity is regulated as follows. Helicase and ATPase activities on forked DNA are stimulated by PriB; E.coli PriB does not stimulate this helicase. PriA:PriB complex-catalyzed duplex DNA winding is inhibited by CGS 15943 (CHEBI:131351). CGS 15943 decreases ATP hydrolysis and decreases PriA's affinity for DNA. Functionally, initiates the restart of stalled replication forks, which reloads the replicative helicase on sites other than the origin of replication. Recognizes and binds to abandoned replication forks and remodels them to uncover a helicase loading site. Promotes assembly of the primosome at these replication forks. Its function is as follows. DNA helicase with greatest unwinding activity on forked DNA substrates with relatively short duplex lagging strand arms. A DNA-dependent ATPase. Required for DNA transformation and DNA repair. Binds single-stranded (ss)DNA and replication fork-like DNA but not double-stranded (ds)DNA. In Neisseria gonorrhoeae (strain ATCC 700825 / FA 1090), this protein is Replication restart protein PriA.